An 87-amino-acid chain; its full sequence is Anaphase-promoting complex subunit 11 (87 aa).

An RING-type; atypical zinc finger spans residues 35–77; that stretch reads CVDCKIPGDDCPPVWGVCNHAFHMHCILKWLNANELQQCPMCR.

It belongs to the RING-box family. As to quaternary structure, the APC/C is composed of at least 13 subunits that stay tightly associated throughout the cell cycle: anapc1, anapc2, anapc3, anapc4, anapc5, anapc6, anapc7, anapc8, anapc10, anapc11, cdc20, cdc26 and cdh1.

The protein resides in the nucleus. The protein operates within protein modification; protein ubiquitination. Component of the anaphase promoting complex/cyclosome (APC/C), a cell cycle-regulated E3 ubiquitin-protein ligase complex that controls progression through mitosis and the G1 phase of the cell cycle. The polypeptide is Anaphase-promoting complex subunit 11 (anapc11) (Dictyostelium discoideum (Social amoeba)).